A 182-amino-acid polypeptide reads, in one-letter code: Adenylate kinase (182 aa).

Position 12–17 (12–17 (GAGKGT)) interacts with ATP. An NMP region spans residues 32–61 (STGDLLREEVSGGTDLGKKAELIMNKGELV). AMP contacts are provided by residues Thr33, Arg38, 59–61 (ELV), 85–88 (GFPR), and Gln92. The LID stretch occupies residues 126–132 (GRGRKDD). Arg127 contacts ATP. Residues Arg129 and Arg140 each coordinate AMP. Residue Gly168 coordinates ATP.

The protein belongs to the adenylate kinase family. As to quaternary structure, monomer.

It localises to the cytoplasm. It carries out the reaction AMP + ATP = 2 ADP. The protein operates within purine metabolism; AMP biosynthesis via salvage pathway; AMP from ADP: step 1/1. Functionally, catalyzes the reversible transfer of the terminal phosphate group between ATP and AMP. Plays an important role in cellular energy homeostasis and in adenine nucleotide metabolism. This chain is Adenylate kinase, found in Prochlorococcus marinus (strain SARG / CCMP1375 / SS120).